Here is a 131-residue protein sequence, read N- to C-terminus: MSMTDPIADMLTRVRNAQRAEKAEVSMPSSKIKQAIANVLKEEGYIESFEVGGDEKKPELKISLRYYQGEPVIRELERASSPGLRLFKDKGSLPRVRNGLGVAIVSTSKGVMTDRAAREAGHGGEVLCYVF.

The protein belongs to the universal ribosomal protein uS8 family. As to quaternary structure, part of the 30S ribosomal subunit. Contacts proteins S5 and S12.

Functionally, one of the primary rRNA binding proteins, it binds directly to 16S rRNA central domain where it helps coordinate assembly of the platform of the 30S subunit. In Alkalilimnicola ehrlichii (strain ATCC BAA-1101 / DSM 17681 / MLHE-1), this protein is Small ribosomal subunit protein uS8.